Reading from the N-terminus, the 550-residue chain is Glucose import ATP-binding protein TsgD13 (550 aa).

ABC transporter domains lie at 7-270 (LRME…VGRE) and 287-533 (LRAR…TGGG). An ATP-binding site is contributed by 39–46 (GENGAGKS). The interval 529-550 (MTGGGDATATAGAQVRGLGGSS) is disordered.

Belongs to the ABC transporter superfamily. In terms of assembly, the complex is composed of two ATP-binding proteins (TsgD13), two transmembrane proteins (TsgB13 and TsgC13) and a solute-binding protein (TsgA13).

It localises to the cell membrane. It catalyses the reaction D-glucose(out) + ATP + H2O = D-glucose(in) + ADP + phosphate + H(+). Its function is as follows. Part of an ABC transporter complex involved in glucose import. Responsible for energy coupling to the transport system. This Haloferax volcanii (strain ATCC 29605 / DSM 3757 / JCM 8879 / NBRC 14742 / NCIMB 2012 / VKM B-1768 / DS2) (Halobacterium volcanii) protein is Glucose import ATP-binding protein TsgD13 (tsgD13).